Here is a 274-residue protein sequence, read N- to C-terminus: 2,3,4,5-tetrahydropyridine-2,6-dicarboxylate N-succinyltransferase (274 aa).

It belongs to the transferase hexapeptide repeat family.

It localises to the cytoplasm. It carries out the reaction (S)-2,3,4,5-tetrahydrodipicolinate + succinyl-CoA + H2O = (S)-2-succinylamino-6-oxoheptanedioate + CoA. It functions in the pathway amino-acid biosynthesis; L-lysine biosynthesis via DAP pathway; LL-2,6-diaminopimelate from (S)-tetrahydrodipicolinate (succinylase route): step 1/3. The protein is 2,3,4,5-tetrahydropyridine-2,6-dicarboxylate N-succinyltransferase of Klebsiella pneumoniae (strain 342).